We begin with the raw amino-acid sequence, 1657 residues long: Alsin (1657 aa).

RCC1 repeat units follow at residues 59-108 (DGEV…AVTD), 109-167 (NGVA…ALSI), and 169-218 (REIW…ALVQ). The segment at 432 to 480 (TGAQAGSSAIGPEGLKDSREEQVKQESMQGKKSSSLVDIREEETEGGSR) is disordered. Positions 445–455 (GLKDSREEQVK) are enriched in basic and acidic residues. Positions 456–467 (QESMQGKKSSSL) are enriched in polar residues. Phosphoserine occurs at positions 465, 466, 483, and 492. Position 510 is a phosphothreonine (threonine 510). 2 RCC1 repeats span residues 525-576 (RTEV…ALTA) and 578-627 (SQVY…FLVD). The residue at position 533 (lysine 533) is an N6-acetyllysine. In terms of domain architecture, DH spans 690–885 (GYIASLHELA…ECLALHLGRK (196 aa)). One can recognise a PH domain in the interval 901–1007 (GKMTDSLRKP…RAISQAVDQA (107 aa)). 8 MORN repeats span residues 1049–1071 (YDGRWLSGKPHGRGVLKWPDGKM), 1072–1094 (YSGMFRNGLEDGYGEYRIPNKAM), 1100–1122 (YVGHWKEGKMCGQGVYSYASGEV), 1123–1145 (FEGCFQDNMRHGHGLLRSGKLTS), 1151–1173 (FIGQWVMDKKAGYGVFDDITRGE), 1175–1197 (YMGMWQDDVCQGNGVVVTQFGLY), 1198–1220 (YEGNFHLNKMMGNGVLLSEDDTI), and 1221–1244 (YEGEFSDDWTLSGKGTLTMPNGDY). Phosphoserine is present on serine 1335. The region spanning 1513–1657 (KQPDIALLGF…YYQIQREKLN (145 aa)) is the VPS9 domain.

Forms a heteromeric complex with ALS2CL. Interacts with ALS2CL.

May act as a GTPase regulator. Controls survival and growth of spinal motoneurons. The polypeptide is Alsin (ALS2) (Homo sapiens (Human)).